We begin with the raw amino-acid sequence, 421 residues long: Tyrosine--tRNA ligase 1 (421 aa).

Position 35 (Tyr35) interacts with L-tyrosine. Positions 40–49 (PTADSLHIGH) match the 'HIGH' region motif. L-tyrosine contacts are provided by Tyr170 and Gln174. Residues 231 to 235 (KFGKT) carry the 'KMSKS' region motif. Position 234 (Lys234) interacts with ATP. In terms of domain architecture, S4 RNA-binding spans 354-420 (LPLVEILVQS…GKKKYFLLTY (67 aa)).

Belongs to the class-I aminoacyl-tRNA synthetase family. TyrS type 1 subfamily. Homodimer.

It is found in the cytoplasm. It carries out the reaction tRNA(Tyr) + L-tyrosine + ATP = L-tyrosyl-tRNA(Tyr) + AMP + diphosphate + H(+). In terms of biological role, catalyzes the attachment of tyrosine to tRNA(Tyr) in a two-step reaction: tyrosine is first activated by ATP to form Tyr-AMP and then transferred to the acceptor end of tRNA(Tyr). This Bacillus licheniformis (strain ATCC 14580 / DSM 13 / JCM 2505 / CCUG 7422 / NBRC 12200 / NCIMB 9375 / NCTC 10341 / NRRL NRS-1264 / Gibson 46) protein is Tyrosine--tRNA ligase 1.